The following is a 184-amino-acid chain: Bifunctional protein PyrR (184 aa).

Positions 105–117 match the PRPP-binding motif; sequence VVMVDDVLFTGRT.

The protein belongs to the purine/pyrimidine phosphoribosyltransferase family. PyrR subfamily.

The enzyme catalyses UMP + diphosphate = 5-phospho-alpha-D-ribose 1-diphosphate + uracil. Functionally, regulates the transcription of the pyrimidine nucleotide (pyr) operon in response to exogenous pyrimidines. In terms of biological role, also displays a weak uracil phosphoribosyltransferase activity which is not physiologically significant. This chain is Bifunctional protein PyrR, found in Rubrobacter xylanophilus (strain DSM 9941 / JCM 11954 / NBRC 16129 / PRD-1).